Consider the following 329-residue polypeptide: Sulfate-binding protein (329 aa).

The N-terminal stretch at 1–19 (MKKWGVGFTLLLASTSILA) is a signal peptide.

The protein belongs to the prokaryotic sulfate-binding protein family.

It localises to the periplasm. Functionally, this protein specifically binds sulfate and is involved in its transmembrane transport. The polypeptide is Sulfate-binding protein (sbp) (Salmonella typhimurium (strain LT2 / SGSC1412 / ATCC 700720)).